The following is a 490-amino-acid chain: Glutamyl-tRNA(Gln) amidotransferase subunit A (490 aa).

Residues lysine 78 and serine 153 each act as charge relay system in the active site. The active-site Acyl-ester intermediate is serine 177.

It belongs to the amidase family. GatA subfamily. In terms of assembly, heterotrimer of A, B and C subunits.

The catalysed reaction is L-glutamyl-tRNA(Gln) + L-glutamine + ATP + H2O = L-glutaminyl-tRNA(Gln) + L-glutamate + ADP + phosphate + H(+). Allows the formation of correctly charged Gln-tRNA(Gln) through the transamidation of misacylated Glu-tRNA(Gln) in organisms which lack glutaminyl-tRNA synthetase. The reaction takes place in the presence of glutamine and ATP through an activated gamma-phospho-Glu-tRNA(Gln). The chain is Glutamyl-tRNA(Gln) amidotransferase subunit A from Desulforapulum autotrophicum (strain ATCC 43914 / DSM 3382 / VKM B-1955 / HRM2) (Desulfobacterium autotrophicum).